The following is a 462-amino-acid chain: Solute carrier family 41 member 3 (462 aa).

The next 9 membrane-spanning stretches (helical) occupy residues 41-61 (CQVA…GLVM), 121-141 (LAVV…ASLM), 163-183 (VITA…IVIG), 194-214 (IATP…LALM), 225-245 (WYLT…WIFI), 258-278 (YGWF…LILS), 351-371 (VLLF…CLVE), 380-400 (IFVL…LYLA), and 424-444 (GLGD…DWLL).

This sequence belongs to the SLC41A transporter family.

It localises to the mitochondrion inner membrane. It catalyses the reaction Mg(2+)(in) + 2 Na(+)(out) = Mg(2+)(out) + 2 Na(+)(in). In terms of biological role, na(+)/Mg(2+) ion exchanger that acts as a predominant Mg(2+) efflux system at the mitochondrial inner membrane. The chain is Solute carrier family 41 member 3 (Slc41a3) from Rattus norvegicus (Rat).